Here is a 244-residue protein sequence, read N- to C-terminus: Ribosomal RNA small subunit methyltransferase NEP1 (244 aa).

The disordered stretch occupies residues 1–34 (MAAPSDGFKPRERSGGEQAQDWDALPPKRPRLGA). Ala2 is modified (N-acetylalanine). 2 positions are modified to phosphoserine: Ser5 and Ser14. Residues Thr176, Gly201, Gly206, and 219–224 (ISNYPL) each bind S-adenosyl-L-methionine.

Belongs to the class IV-like SAM-binding methyltransferase superfamily. RNA methyltransferase NEP1 family. In terms of assembly, homodimer. Part of the small subunit (SSU) processome, composed of more than 70 proteins and the RNA chaperone small nucleolar RNA (snoRNA) U3.

Its subcellular location is the nucleus. The protein localises to the nucleolus. It carries out the reaction pseudouridine(1248) in human 18S rRNA + S-adenosyl-L-methionine = N(1)-methylpseudouridine(1248) in human 18S rRNA + S-adenosyl-L-homocysteine + H(+). S-adenosyl-L-methionine-dependent pseudouridine N(1)-methyltransferase that methylates pseudouridine at position 1248 (Psi1248) in 18S rRNA. Involved the biosynthesis of the hypermodified N1-methyl-N3-(3-amino-3-carboxypropyl) pseudouridine (m1acp3-Psi) conserved in eukaryotic 18S rRNA. Is not able to methylate uridine at this position. Also has an essential role in 40S ribosomal subunit biogenesis independent on its methyltransferase activity, facilitating the incorporation of ribosomal protein S19 during the formation of pre-ribosomes. Part of the small subunit (SSU) processome, first precursor of the small eukaryotic ribosomal subunit. During the assembly of the SSU processome in the nucleolus, many ribosome biogenesis factors, an RNA chaperone and ribosomal proteins associate with the nascent pre-rRNA and work in concert to generate RNA folding, modifications, rearrangements and cleavage as well as targeted degradation of pre-ribosomal RNA by the RNA exosome. The chain is Ribosomal RNA small subunit methyltransferase NEP1 from Homo sapiens (Human).